Consider the following 218-residue polypeptide: Glutathione S-transferase Mu 1 (218 aa).

The GST N-terminal domain maps to 2–88; sequence PMTLGYWDIR…YIARKHNLCG (87 aa). 7–8 provides a ligand contact to glutathione; the sequence is YW. Thr34 is modified (phosphothreonine). Glutathione is bound by residues 43-46, Lys50, 59-60, and 72-73; these read RSQW, NL, and QS. Positions 90-208 constitute a GST C-terminal domain; the sequence is TEEEKIRVDI…KSSRFLPKPL (119 aa). A substrate-binding site is contributed by Tyr116.

Belongs to the GST superfamily. Mu family. Homodimer.

The protein resides in the cytoplasm. The enzyme catalyses RX + glutathione = an S-substituted glutathione + a halide anion + H(+). It carries out the reaction prostaglandin A2 + glutathione = prostaglandin A2-S-(R)-glutathione. It catalyses the reaction prostaglandin J2 + glutathione = prostaglandin J2-S-(R)-glutathione. The catalysed reaction is prostaglandin J2 + glutathione = prostaglandin J2-S-(S)-glutathione. The enzyme catalyses prostaglandin A2 + glutathione = prostaglandin A2-S-(S)-glutathione. It carries out the reaction 11(S)-hydroxy-14(S),15(S)-epoxy-(5Z,8Z,12E)-eicosatrienoate + glutathione = (11S,15S)-dihydroxy-14(R)-S-glutathionyl-(5Z,8Z,12E)-eicosatrienoate. Its function is as follows. Conjugation of reduced glutathione to a wide number of exogenous and endogenous hydrophobic electrophiles. Involved in the formation of glutathione conjugates of both prostaglandin A2 (PGA2) and prostaglandin J2 (PGJ2). Participates in the formation of novel hepoxilin regioisomers. The protein is Glutathione S-transferase Mu 1 (GSTM1) of Macaca fascicularis (Crab-eating macaque).